The sequence spans 471 residues: Putative multidrug resistance protein MdtD (471 aa).

Residues 1-11 are Periplasmic-facing; sequence MTDLPDSTRWQ. Residues 12–32 traverse the membrane as a helical segment; sequence LWIVAFGFFMQSLDTTIVNTA. The Cytoplasmic portion of the chain corresponds to 33–48; that stretch reads LPSMAQSLGESPLHMH. Residues 49 to 69 traverse the membrane as a helical segment; it reads MVIVSYVLTVAVMLPASGWLA. Over 70–76 the chain is Periplasmic; it reads DKVGVRN. A helical membrane pass occupies residues 77 to 97; it reads IFFTAIVLFTLGSLFCALSGT. Residues 98 to 101 lie on the Cytoplasmic side of the membrane; that stretch reads LNEL. A helical transmembrane segment spans residues 102–124; it reads LLARALQGVGGAMMVPVGRLTVM. Topologically, residues 125–137 are periplasmic; it reads KIVPREQYMAAMT. Residues 138 to 158 traverse the membrane as a helical segment; it reads FVTLPGQIGPLLGPALGGLLV. At 159 to 164 the chain is on the cytoplasmic side; it reads EYASWH. A helical membrane pass occupies residues 165 to 185; the sequence is WIFLINIPVGIIGAIATLMLM. The Periplasmic segment spans residues 186 to 196; that stretch reads PNYTMQTRRFD. The chain crosses the membrane as a helical span at residues 197–217; the sequence is LSGFLLLAVGMAVLTLALDGS. The Cytoplasmic portion of the chain corresponds to 218–224; the sequence is KGTGFSP. Residues 225–245 traverse the membrane as a helical segment; that stretch reads LAIAGLVAVGVVALVLYLLHA. The Periplasmic portion of the chain corresponds to 246–262; sequence QNNNRALFSLKLFRTRT. The helical transmembrane segment at 263-283 threads the bilayer; that stretch reads FSLGLAGSFAGRIGSGMLPFM. Over 284 to 285 the chain is Cytoplasmic; that stretch reads TP. Residues 286–306 traverse the membrane as a helical segment; sequence VFLQIGLGFSPFHAGLMMIPM. Residues 307-341 are Periplasmic-facing; sequence VLGSMGMKRIVVQVVNRFGYRWVLVATTLGLSLVT. A helical transmembrane segment spans residues 342–362; it reads LLFMTTALLGWYYVLPFVLFL. Residues 363 to 395 lie on the Cytoplasmic side of the membrane; that stretch reads QGMVNSTRFSSMNTLTLKDLPDNLASSGNSLLS. The helical transmembrane segment at 396 to 416 threads the bilayer; it reads MIMQLSMSIGVTIAGLLLGLF. Residues 417-430 lie on the Periplasmic side of the membrane; it reads GSQHVSVDSGTTQT. A helical membrane pass occupies residues 431–451; it reads VFMYTWLSMAFIIALPAFVFA. Residues 452-471 are Cytoplasmic-facing; it reads RVPSDTHQNVAISRRKRSAQ.

This sequence belongs to the major facilitator superfamily. TCR/Tet family.

It localises to the cell inner membrane. The chain is Putative multidrug resistance protein MdtD from Escherichia coli O81 (strain ED1a).